Here is a 156-residue protein sequence, read N- to C-terminus: Small ribosomal subunit protein uS7 (156 aa).

This sequence belongs to the universal ribosomal protein uS7 family. As to quaternary structure, part of the 30S ribosomal subunit. Contacts proteins S9 and S11.

Functionally, one of the primary rRNA binding proteins, it binds directly to 16S rRNA where it nucleates assembly of the head domain of the 30S subunit. Is located at the subunit interface close to the decoding center, probably blocks exit of the E-site tRNA. The protein is Small ribosomal subunit protein uS7 of Shewanella amazonensis (strain ATCC BAA-1098 / SB2B).